The following is a 427-amino-acid chain: Septin-8-A (427 aa).

The Septin-type G domain occupies 39–305; the sequence is QGFCFNILCV…ELYRRCKLEE (267 aa). The segment at 49–56 is G1 motif; sequence GETGIGKS. GTP contacts are provided by residues 49-56, Gly104, 185-193, Gly239, and Arg254; these read GETGIGKS and KADTISKSE. A G3 motif region spans residues 101 to 104; sequence DTVG. Residues 184–187 form a G4 motif region; the sequence is AKAD. Residues 320–409 are a coiled coil; it reads LQETYEAKRK…KAAMEALQSQ (90 aa). The span at 376-389 shows a compositional bias: basic and acidic residues; it reads QEESKKVEDKRRDL. The interval 376-427 is disordered; sequence QEESKKVEDKRRDLEEEMNSFNRRKAAMEALQSQSFQATSQQPLKKDKDRKN. Residues 406 to 418 show a composition bias toward polar residues; it reads LQSQSFQATSQQP.

It belongs to the TRAFAC class TrmE-Era-EngA-EngB-Septin-like GTPase superfamily. Septin GTPase family.

This is Septin-8-A (sept8-a) from Xenopus laevis (African clawed frog).